A 310-amino-acid polypeptide reads, in one-letter code: p-hydroxybenzoic acid efflux pump subunit AaeA (310 aa).

A helical membrane pass occupies residues 12-32 (AITVVLVILAFIAIFNAWVYY).

The protein belongs to the membrane fusion protein (MFP) (TC 8.A.1) family.

The protein resides in the cell inner membrane. Functionally, forms an efflux pump with AaeB. The polypeptide is p-hydroxybenzoic acid efflux pump subunit AaeA (Shigella sonnei (strain Ss046)).